The primary structure comprises 473 residues: Hexaprenyl pyrophosphate synthase, mitochondrial (473 aa).

Isopentenyl diphosphate contacts are provided by Lys-84, Arg-87, and His-186. Asp-193 and Asp-197 together coordinate Mg(2+). An an all-trans-polyprenyl diphosphate-binding site is contributed by Arg-202. Arg-203 serves as a coordination point for isopentenyl diphosphate. Residues Lys-323, Thr-324, Gln-361, and Lys-378 each contribute to the an all-trans-polyprenyl diphosphate site.

This sequence belongs to the FPP/GGPP synthase family. Mg(2+) is required as a cofactor.

The protein localises to the mitochondrion inner membrane. It functions in the pathway cofactor biosynthesis; ubiquinone biosynthesis. Its function is as follows. Assembly of polyisoprenoid side chains. The polyprenyl synthase of coenzyme Q biosynthesis catalyzes the formation from isopentenyl diphosphate of all trans-polyprenyl pyrophosphates generally ranging in length of between 6 and 10 isoprene units depending on the species. The chain is Hexaprenyl pyrophosphate synthase, mitochondrial (COQ1) from Saccharomyces cerevisiae (strain ATCC 204508 / S288c) (Baker's yeast).